Reading from the N-terminus, the 402-residue chain is Deoxyguanosinetriphosphate triphosphohydrolase-like protein 2 (402 aa).

Positions 72-215 constitute an HD domain; it reads RLTHSLEVAQ…MDLADEIAYA (144 aa).

The protein belongs to the dGTPase family. Type 2 subfamily.

The protein is Deoxyguanosinetriphosphate triphosphohydrolase-like protein 2 of Vibrio cholerae serotype O1 (strain ATCC 39315 / El Tor Inaba N16961).